Here is a 416-residue protein sequence, read N- to C-terminus: Cell division control protein 3 (416 aa).

Residues Arg-32 to Arg-307 enclose the Septin-type G domain. Residues Gly-42–Ala-49 form a G1 motif region. Residues Gly-42–Ala-49, Ser-79, Gly-105, Lys-184–Glu-192, Gly-240, and Arg-256 each bind GTP. A G3 motif region spans residues Thr-102 to Gly-105. The G4 motif stretch occupies residues Ala-183–Asp-186. Residues Ala-323 to Gln-399 are a coiled coil. A disordered region spans residues Glu-392–Arg-416.

It belongs to the TRAFAC class TrmE-Era-EngA-EngB-Septin-like GTPase superfamily. Septin GTPase family.

Its subcellular location is the bud neck. Functionally, plays a role in the cell cycle. Involved in the formation of the ring of filaments in the neck region at the mother-bud junction during mitosis. The polypeptide is Cell division control protein 3 (CDC3) (Candida albicans (Yeast)).